Consider the following 261-residue polypeptide: Putative quercetin 2,3-dioxygenase Ta0133 (261 aa).

A divalent metal cation contacts are provided by His17, His19, His61, and Glu63.

The protein belongs to the pirin family. A divalent metal cation is required as a cofactor.

The enzyme catalyses quercetin + O2 = 2-(3,4-dihydroxybenzoyloxy)-4,6-dihydroxybenzoate + CO. Its pathway is flavonoid metabolism; quercetin degradation. Putative quercetin 2,3-dioxygenase. In Thermoplasma acidophilum (strain ATCC 25905 / DSM 1728 / JCM 9062 / NBRC 15155 / AMRC-C165), this protein is Putative quercetin 2,3-dioxygenase Ta0133.